Consider the following 453-residue polypeptide: Homogentisate 1,2-dioxygenase (453 aa).

Catalysis depends on His306, which acts as the Proton acceptor. Fe cation-binding residues include His349 and Glu355. The homogentisate site is built by Tyr364 and His385. His385 is a binding site for Fe cation.

It belongs to the homogentisate dioxygenase family. In terms of assembly, hexamer; dimer of trimers. It depends on Fe cation as a cofactor.

The catalysed reaction is homogentisate + O2 = 4-maleylacetoacetate + H(+). It participates in amino-acid degradation; L-phenylalanine degradation; acetoacetate and fumarate from L-phenylalanine: step 4/6. Functionally, involved in the catabolism of homogentisate (2,5-dihydroxyphenylacetate or 2,5-OH-PhAc), a central intermediate in the degradation of phenylalanine and tyrosine. Catalyzes the oxidative ring cleavage of the aromatic ring of homogentisate to yield maleylacetoacetate. The sequence is that of Homogentisate 1,2-dioxygenase from Rhizobium etli (strain ATCC 51251 / DSM 11541 / JCM 21823 / NBRC 15573 / CFN 42).